Here is a 422-residue protein sequence, read N- to C-terminus: Glutamyl-tRNA reductase (422 aa).

Residues 49-52, Ser107, 112-114, and Gln118 each bind substrate; these read TCNR and EPQ. Cys50 serves as the catalytic Nucleophile. 187 to 192 provides a ligand contact to NADP(+); it reads GAGETI.

This sequence belongs to the glutamyl-tRNA reductase family. In terms of assembly, homodimer.

The catalysed reaction is (S)-4-amino-5-oxopentanoate + tRNA(Glu) + NADP(+) = L-glutamyl-tRNA(Glu) + NADPH + H(+). It participates in porphyrin-containing compound metabolism; protoporphyrin-IX biosynthesis; 5-aminolevulinate from L-glutamyl-tRNA(Glu): step 1/2. Catalyzes the NADPH-dependent reduction of glutamyl-tRNA(Glu) to glutamate 1-semialdehyde (GSA). This is Glutamyl-tRNA reductase from Stutzerimonas stutzeri (strain A1501) (Pseudomonas stutzeri).